The chain runs to 329 residues: Delta-aminolevulinic acid dehydratase (329 aa).

The Zn(2+) site is built by cysteine 122, cysteine 124, and cysteine 132. The Schiff-base intermediate with substrate role is filled by lysine 199. Residues arginine 209 and arginine 221 each coordinate 5-aminolevulinate. The active-site Schiff-base intermediate with substrate is the lysine 252. Serine 279 and tyrosine 318 together coordinate 5-aminolevulinate.

The protein belongs to the ALAD family. Homooctamer. The cofactor is Zn(2+).

It catalyses the reaction 2 5-aminolevulinate = porphobilinogen + 2 H2O + H(+). It functions in the pathway porphyrin-containing compound metabolism; protoporphyrin-IX biosynthesis; coproporphyrinogen-III from 5-aminolevulinate: step 1/4. Catalyzes an early step in the biosynthesis of tetrapyrroles. Binds two molecules of 5-aminolevulinate per subunit, each at a distinct site, and catalyzes their condensation to form porphobilinogen. This is Delta-aminolevulinic acid dehydratase (hem2) from Schizosaccharomyces pombe (strain 972 / ATCC 24843) (Fission yeast).